We begin with the raw amino-acid sequence, 165 residues long: MLMKRLFSSSHVFSSSSASSNLLKIGSVLKQARTFADDDVLGYSKLTHDANPLHFDAECAKNAGFTDCLVPGMLVASLFPRIIAAHFPGAIYVSQTLHFKLPVYIGDEIIAEVQAVSIRQIKNKYIAKLSTKCIKRDGPLVIDGEATAMLPSLVMEPPNLEITSS.

The N-terminal 35 residues, 1 to 35 (MLMKRLFSSSHVFSSSSASSNLLKIGSVLKQARTF), are a transit peptide targeting the mitochondrion. The region spanning 36-124 (ADDDVLGYSK…AVSIRQIKNK (89 aa)) is the MaoC-like domain.

Homodimer.

It is found in the mitochondrion. It carries out the reaction a (3R)-hydroxyacyl-[ACP] = a (2E)-enoyl-[ACP] + H2O. It functions in the pathway lipid metabolism; fatty acid biosynthesis. In terms of biological role, 3-hydroxyl-[acyl-carrier-protein] (3-hydroxyl-ACP) dehydratase required for mitochondrial fatty acid synthesis (mtFAS). Essential for photorespiration, tomato morphogenesis and plant development, probably by influencing mitochondrial membrane lipid composition and other lipid metabolic pathways, and by contributing to energy supply and reactive oxygen species (ROS) homeostasis. In Solanum lycopersicum (Tomato), this protein is 3-hydroxyacyl-[acyl-carrier-protein] dehydratase FERN, mitochondrial.